A 234-amino-acid chain; its full sequence is Ammonia monooxygenase gamma subunit (234 aa).

A signal peptide spans 1-20; it reads MRMIKFLLLAILLAPFVAHS. In terms of domain architecture, Cytochrome c spans 38 to 193; sequence ESLQRGAKGF…RFVADLVNYM (156 aa). Residues C51, C54, and H55 each coordinate heme c. The chain crosses the membrane as a helical span at residues 206-226; it reads ELGITVLLFLFGMLGLTYLLK.

Belongs to the cytochrome c family. The soluble ammonia monooxygenase is a nonamer composed of three alpha subunits (AmoA), three beta subunits (AmoB) and three gamma subunits (Cytochrome c1 PetC). The cofactor is heme c.

The protein resides in the cell membrane. The protein localises to the cytoplasm. Its function is as follows. Part of the ammonia monooxygenase complex, which catalyzes the oxidation of ammonia to hydroxylamine, the first reaction in the process of ammonia oxidation to nitrite. This Nitrosomonas europaea (strain ATCC 19718 / CIP 103999 / KCTC 2705 / NBRC 14298) protein is Ammonia monooxygenase gamma subunit.